Reading from the N-terminus, the 511-residue chain is Glucans biosynthesis protein G (511 aa).

The signal sequence occupies residues 1-22 (MMKMRWLSAAVMLTLYTSSSWA).

The protein belongs to the OpgD/OpgG family.

It localises to the periplasm. Its pathway is glycan metabolism; osmoregulated periplasmic glucan (OPG) biosynthesis. Functionally, involved in the biosynthesis of osmoregulated periplasmic glucans (OPGs). This is Glucans biosynthesis protein G from Escherichia coli O81 (strain ED1a).